The sequence spans 467 residues: Spermatogenesis- and oogenesis-specific basic helix-loop-helix-containing protein 2 (467 aa).

In terms of domain architecture, bHLH spans 200–251 (QASFLHSTKEKLRRERIKSCCEQLRTLLPYVKGRKSDVASVIEATVDYVKQV). Low complexity predominate over residues 443-453 (ASASDHQASQP). The interval 443–467 (ASASDHQASQPPALPSPQPHDSSYF) is disordered.

In terms of assembly, forms both hetero- and homodimers with SOHLH1. As to expression, preferentially expressed in the adult ovary and testis. Expressed in the majority of spermatogonia in adult animals, but not in the most undifferentiated spermatogonial population.

Its subcellular location is the nucleus. It localises to the cytoplasm. In terms of biological role, transcription regulator of both male and female germline differentiation. Suppresses genes involved in spermatogonial stem cells maintenance, and induces genes important for spermatogonial differentiation. Coordinates oocyte differentiation without affecting meiosis I. The sequence is that of Spermatogenesis- and oogenesis-specific basic helix-loop-helix-containing protein 2 (Sohlh2) from Mus musculus (Mouse).